The primary structure comprises 380 residues: uncharacterized protein (380 aa).

Positions 1-28 (MQFLSDTQRMVLSRAVCASFFFFHVAVA) are cleaved as a signal peptide. Residues 307–380 (AGDEKPRGYQ…DAGYETFPLF (74 aa)) form the SPOR domain.

This is an uncharacterized protein from Treponema pallidum (strain Nichols).